We begin with the raw amino-acid sequence, 173 residues long: Ferritin heavy chain (173 aa).

The region spanning 6-155 (QNFHEECERG…GYVTNLKRCG (150 aa)) is the Ferritin-like diiron domain. Positions 23, 58, 61, 103, and 137 each coordinate Fe cation.

Belongs to the ferritin family. As to quaternary structure, oligomer of 24 subunits. There are two types of subunits: L (light) chain and H (heavy) chain. The functional molecule is roughly spherical and contains a central cavity into which the insoluble mineral iron core is deposited.

It localises to the cytoplasm. The enzyme catalyses 4 Fe(2+) + O2 + 4 H(+) = 4 Fe(3+) + 2 H2O. Its function is as follows. Stores iron in a soluble, non-toxic, readily available form. Important for iron homeostasis. Has ferroxidase activity. Iron is taken up in the ferrous form and deposited as ferric hydroxides after oxidation. The sequence is that of Ferritin heavy chain from Echinococcus granulosus (Hydatid tapeworm).